A 535-amino-acid chain; its full sequence is Aklavinone 12-hydroxylase RdmE (535 aa).

L15, G16, E35, Q119, and L143 together coordinate FAD. The Proton acceptor role is filled by Y224. D308 serves as a coordination point for FAD. Residue G317 participates in aklavinone binding.

It belongs to the PheA/TfdB FAD monooxygenase family. As to quaternary structure, monomer. FAD serves as cofactor.

The enzyme catalyses aklavinone + NADPH + O2 + H(+) = epsilon-rhodomycinone + NADP(+) + H2O. It functions in the pathway antibiotic biosynthesis; daunorubicin biosynthesis. The protein operates within antibiotic biosynthesis; carminomycin biosynthesis. It participates in antibiotic biosynthesis; rhodomycin biosynthesis. Inhibited by phenylglyoxal and 2,3-butanedione. NADP provides a partial protection against inhibition by phenylglyoxal. Increasing the methanol concentration in the assay causes inhibition of the enzyme. In terms of biological role, involved in the biosynthesis of the anthracyclines carminomycin, rhodomycin and daunorubicin (daunomycin) which are aromatic polyketide antibiotics that exhibit high cytotoxicity and are widely applied in the chemotherapy of a variety of cancers. Catalyzes the incorporation of a hydroxyl group at position C-11 of aklavinone, resulting in epsilon-rhodomycinone. It cannot accept substrates glycosylated at position C-7 and is specific for the C-9R configuration of anthracyclines. It can use both NAD or NADP but it is slowly inactivated in the presence of NADH. The polypeptide is Aklavinone 12-hydroxylase RdmE (rdmE) (Streptomyces purpurascens).